The chain runs to 145 residues: Large ribosomal subunit protein uL13 (145 aa).

This sequence belongs to the universal ribosomal protein uL13 family. Part of the 50S ribosomal subunit.

Its function is as follows. This protein is one of the early assembly proteins of the 50S ribosomal subunit, although it is not seen to bind rRNA by itself. It is important during the early stages of 50S assembly. The sequence is that of Large ribosomal subunit protein uL13 from Geobacillus kaustophilus (strain HTA426).